We begin with the raw amino-acid sequence, 543 residues long: MTNITKRSLVAAGVLAALMAGNVALAADVPAGVTLAEKQTLVRNNGSEVQSLDPHKIEGVPESNISRDLFEGLLVSDLDGHPAPGVAESWDNKDAKVWTFHLRKDAKWSDGTPVTAQDFVYSWQRSVDPNTASPYASYLQYGHIAGIDEILEGKKPITDLGVKAIDDHTLEVTLSEPVPYFYKLLVHPSTSPVPKAAIEKFGEKWTQPGNIVTNGAYTLKDWVVNERIVLERSPTYWNNAKTVINQVTYLPIASEVTDVNRYRSGEIDMTNNSMPIELFQKLKKEIPDEVHVDPYLCTYYYEINNQKPPFNDVRVRTALKLGMDRDIIVNKVKAQGNMPAYGYTPPYTDGAKLTQPEWFGWSQEKRNEEAKKLLAEAGYTADKPLTINLLYNTSDLHKKLAIAASSLWKKNIGVNVKLVNQEWKTFLDTRHQGTFDVARAGWCADYNEPTSFLNTMLSNSSMNTAHYKSPAFDSIMAETLKVTDEAQRTALYTKAEQQLDKDSAIVPVYYYVNARLVKPWVGGYTGKDPLDNTYTRNMYIVKH.

Residues 1-26 (MTNITKRSLVAAGVLAALMAGNVALA) form the signal peptide. A disulfide bridge links C297 with C443.

This sequence belongs to the bacterial solute-binding protein 5 family. As to quaternary structure, the complex is composed of two ATP-binding proteins (OppD and OppF), two transmembrane proteins (OppB and OppC) and a solute-binding protein (OppA).

Its subcellular location is the periplasm. Part of the ABC transporter complex OppABCDF involved in the uptake of oligopeptides. Plays an important nutritional role. Binds peptides containing from two to five amino acid residues. Displays a preference for tripeptides and tetrapeptides over dipeptides and pentapeptides, for peptides composed of L-amino acids and for positively charged peptides. Cannot bind the cell wall peptide L-Ala-D-Gly-gamma-meso-diaminopimelic acid. The protein is Periplasmic oligopeptide-binding protein OppA of Escherichia coli (strain K12).